A 33-amino-acid chain; its full sequence is uncharacterized protein (33 aa).

The protein localises to the cytoplasm. Its subcellular location is the nucleus. This is an uncharacterized protein from Schizosaccharomyces pombe (strain 972 / ATCC 24843) (Fission yeast).